A 1452-amino-acid chain; its full sequence is ABC multidrug transporter A-1 (1452 aa).

The interval 1–20 (MNESHEAGKNSSTNVEEREE) is disordered. Residues N2, N10, N228, N287, and N311 are each glycosylated (N-linked (GlcNAc...) asparagine). One can recognise an ABC transporter 1 domain in the interval 110–363 (LKTLSLARIA…FLQMGFVCPD (254 aa)). 6 helical membrane passes run 474-494 (VTISSLFGNTIISLVIASIFY), 508-528 (ALLFFAVLMNALGCGLEMLTL), 554-574 (MIMDLPYKILNAITSNIVLYF), 583-603 (GAFFFFVFTSFILTLTMSMFF), 616-636 (VLPFSAVLLLGLSMYTGFAIP), and 725-745 (IGVIFAYMFLLGAVYLVATDF). The ABC transporter 2 domain maps to 802-1044 (FQWKDVCFDI…ILIDYFVRNG (243 aa)). An ATP-binding site is contributed by 838-845 (GVSGAGKT). A run of 6 helical transmembrane segments spans residues 1153-1173 (ALCVLSALFVGFSLFHTPNTI), 1183-1203 (IFMLLTLFGQLIQQIMPHFVA), 1223-1243 (FLIANIVVELPWNSLMSVLMF), 1271-1291 (LMIWTFLLFSSTFAHFMIAAF), 1297-1317 (AGNLGNLLFLLCLLFCGVLAT), and 1324-1344 (FWIFMYRVSPFTYLVSGMLSV). Residues N1350, N1365, and N1391 are each glycosylated (N-linked (GlcNAc...) asparagine). A helical transmembrane segment spans residues 1418 to 1438 (FGLMWVFIVFNIFAACSLYWW).

It belongs to the ABC transporter superfamily. ABCG family. PDR (TC 3.A.1.205) subfamily.

It is found in the membrane. In terms of biological role, ABC transporter that seems not to be involved in the efflux of toxic substances, at least not the classical compounds such as itraconazole, amphotericin B, voriconazole, posaconazole, ravuconazole, or echinocandins. The chain is ABC multidrug transporter A-1 from Aspergillus fumigatus (strain ATCC MYA-4609 / CBS 101355 / FGSC A1100 / Af293) (Neosartorya fumigata).